Reading from the N-terminus, the 113-residue chain is Tyrosine-protein phosphatase 15 (113 aa).

A Tyrosine-protein phosphatase domain is found at tryptophan 1 to isoleucine 113.

Belongs to the protein-tyrosine phosphatase family.

The catalysed reaction is O-phospho-L-tyrosyl-[protein] + H2O = L-tyrosyl-[protein] + phosphate. This is Tyrosine-protein phosphatase 15 (STY-15) from Styela plicata (Wrinkled sea squirt).